Reading from the N-terminus, the 168-residue chain is Cell division inhibitor SulA (168 aa).

The segment at 106–112 is ftsZ binding; sequence ALLTGNY. Positions 161-168 are lon protease binding; that stretch reads KIHSYLYH.

The protein belongs to the SulA family. As to quaternary structure, interacts with FtsZ. Is rapidly cleaved and degraded by the Lon protease once DNA damage is repaired.

Its function is as follows. Component of the SOS system and an inhibitor of cell division. Accumulation of SulA causes rapid cessation of cell division and the appearance of long, non-septate filaments. In the presence of GTP, binds a polymerization-competent form of FtsZ in a 1:1 ratio, thus inhibiting FtsZ polymerization and therefore preventing it from participating in the assembly of the Z ring. This mechanism prevents the premature segregation of damaged DNA to daughter cells during cell division. The sequence is that of Cell division inhibitor SulA from Yersinia pestis bv. Antiqua (strain Antiqua).